The following is a 365-amino-acid chain: Carbamoyl phosphate synthase small chain (365 aa).

2 CPSase regions span residues 1-166 (MKRQ…PSPG) and 1-169 (MKRQ…GRGH). L-glutamine-binding residues include serine 45, glycine 218, and glycine 220. The Glutamine amidotransferase type-1 domain maps to 170-357 (RVVLVDFGMK…LTMIENFKKE (188 aa)). Cysteine 245 acts as the Nucleophile in catalysis. The L-glutamine site is built by leucine 246, glutamine 249, asparagine 287, glycine 289, and tyrosine 290. Catalysis depends on residues histidine 330 and glutamate 332.

The protein belongs to the CarA family. In terms of assembly, composed of two chains; the small (or glutamine) chain promotes the hydrolysis of glutamine to ammonia, which is used by the large (or ammonia) chain to synthesize carbamoyl phosphate. Tetramer of heterodimers (alpha,beta)4.

It catalyses the reaction hydrogencarbonate + L-glutamine + 2 ATP + H2O = carbamoyl phosphate + L-glutamate + 2 ADP + phosphate + 2 H(+). The enzyme catalyses L-glutamine + H2O = L-glutamate + NH4(+). It participates in amino-acid biosynthesis; L-arginine biosynthesis; carbamoyl phosphate from bicarbonate: step 1/1. It functions in the pathway pyrimidine metabolism; UMP biosynthesis via de novo pathway; (S)-dihydroorotate from bicarbonate: step 1/3. In terms of biological role, small subunit of the glutamine-dependent carbamoyl phosphate synthetase (CPSase). CPSase catalyzes the formation of carbamoyl phosphate from the ammonia moiety of glutamine, carbonate, and phosphate donated by ATP, constituting the first step of 2 biosynthetic pathways, one leading to arginine and/or urea and the other to pyrimidine nucleotides. The small subunit (glutamine amidotransferase) binds and cleaves glutamine to supply the large subunit with the substrate ammonia. This chain is Carbamoyl phosphate synthase small chain, found in Bacillus cereus (strain ATCC 14579 / DSM 31 / CCUG 7414 / JCM 2152 / NBRC 15305 / NCIMB 9373 / NCTC 2599 / NRRL B-3711).